Consider the following 115-residue polypeptide: MSDLDIQIPTAFDPFSEANAGDSGAAAGSKDYVHVRIQQRNGRKSLTTVQGLKKEFSYNKILKDLKKEFCCNGTVVQDPELGQVIQLQGDQRKNVSNFLVQAGIVKKEHIKIHGF.

The protein belongs to the SUI1 family.

Probably involved in translation. This Sporobolus stapfianus (Ressurection grass) protein is Protein translation factor SUI1 homolog.